The sequence spans 532 residues: MQTPKPIKRALLSVSDKTGILDFATALHNAGVELLSTGGTAKLLAEAGLPVKEVSDHTGHPEIMAGRVKTLHPKIHGGILARRGVDEAVMEENNIAPIDLVVVNLYPFAATVANEDCTLEDAIENIDIGGPTMVRAAAKNHKDVTIVVNAADYSRVLAEMNDNNGSLTYSTRFDLAIKAFEHTAEYDGMIANYFGARLDSTGCEADCDHQHSEFPRTYNIQLTKKQDLRYGENSHQEAAFYVENNIQEASVATATQLQGKELSFNNIADTDAALECVKEFEEPACVIVKHANPCGVAIGNDILTAYDRAFKTDPTSAFGGIIAFNRELDAKTAHAIVDRQFVEVIIAPAVSDEAKEVVSAKKNVRLLACGDWAGQLTEGYDFKRVNGGLLVQERDFGMVEMEDLEVVTKRKPSEEELRDLMFCWKVAKYVKSNAIVYCKDGMTVGVGAGQMSRVYSAKIAGIKAADENLEVAGSVMASDAFFPFRDGIDAAAHAGIKAVIQPGGSMRDQEVIDAADEHGIAMVFTGMRHFRH.

An MGS-like domain is found at 1 to 148 (MQTPKPIKRA…KNHKDVTIVV (148 aa)).

The protein belongs to the PurH family.

It catalyses the reaction (6R)-10-formyltetrahydrofolate + 5-amino-1-(5-phospho-beta-D-ribosyl)imidazole-4-carboxamide = 5-formamido-1-(5-phospho-D-ribosyl)imidazole-4-carboxamide + (6S)-5,6,7,8-tetrahydrofolate. It carries out the reaction IMP + H2O = 5-formamido-1-(5-phospho-D-ribosyl)imidazole-4-carboxamide. It participates in purine metabolism; IMP biosynthesis via de novo pathway; 5-formamido-1-(5-phospho-D-ribosyl)imidazole-4-carboxamide from 5-amino-1-(5-phospho-D-ribosyl)imidazole-4-carboxamide (10-formyl THF route): step 1/1. The protein operates within purine metabolism; IMP biosynthesis via de novo pathway; IMP from 5-formamido-1-(5-phospho-D-ribosyl)imidazole-4-carboxamide: step 1/1. The protein is Bifunctional purine biosynthesis protein PurH of Alteromonas mediterranea (strain DSM 17117 / CIP 110805 / LMG 28347 / Deep ecotype).